Here is a 197-residue protein sequence, read N- to C-terminus: Phosphoheptose isomerase (197 aa).

An SIS domain is found at 34–196 (MVQCLLGGNK…DRTLFPQDEQ (163 aa)). A substrate-binding site is contributed by 49 to 51 (NGG). Zn(2+) contacts are provided by His58 and Glu62. Substrate-binding positions include Glu62, 91-92 (ND), 117-119 (STS), Ser122, and Gln172. Zn(2+) is bound by residues Gln172 and His180.

This sequence belongs to the SIS family. GmhA subfamily. As to quaternary structure, homotetramer. Requires Zn(2+) as cofactor.

It is found in the cytoplasm. The catalysed reaction is 2 D-sedoheptulose 7-phosphate = D-glycero-alpha-D-manno-heptose 7-phosphate + D-glycero-beta-D-manno-heptose 7-phosphate. It participates in carbohydrate biosynthesis; D-glycero-D-manno-heptose 7-phosphate biosynthesis; D-glycero-alpha-D-manno-heptose 7-phosphate and D-glycero-beta-D-manno-heptose 7-phosphate from sedoheptulose 7-phosphate: step 1/1. In terms of biological role, catalyzes the isomerization of sedoheptulose 7-phosphate in D-glycero-D-manno-heptose 7-phosphate. The sequence is that of Phosphoheptose isomerase from Shewanella oneidensis (strain ATCC 700550 / JCM 31522 / CIP 106686 / LMG 19005 / NCIMB 14063 / MR-1).